A 756-amino-acid polypeptide reads, in one-letter code: Deoxynucleotidyltransferase terminal-interacting protein 2 (756 aa).

Residues 1 to 99 (MVVTRSARAK…AESNYSVSEH (99 aa)) form a disordered region. Low complexity predominate over residues 9 to 21 (AKASIQAASAESS). A Phosphoserine modification is found at serine 21. Polar residues-rich tracts occupy residues 35–55 (PESSTGSDARTTAESQTTGKQ) and 80–96 (EPSTDGETSEAESNYSV). Serine 117 is modified (phosphoserine). Threonine 129 bears the Phosphothreonine mark. Residues serine 141, serine 145, serine 148, serine 184, and serine 194 each carry the phosphoserine modification. Residues 156-261 (PTEKTTGARR…LSEINKPNFY (106 aa)) are disordered. A compositionally biased stretch (basic residues) spans 201–211 (RRTRSMQRKLK). Residues lysine 217 and lysine 220 each participate in a glycyl lysine isopeptide (Lys-Gly) (interchain with G-Cter in SUMO2) cross-link. Threonine 232 is subject to Phosphothreonine. 3 positions are modified to phosphoserine: serine 239, serine 251, and serine 253. The span at 242–256 (RQTSHLQARSLSEIN) shows a compositional bias: polar residues. Glycyl lysine isopeptide (Lys-Gly) (interchain with G-Cter in SUMO2) cross-links involve residues lysine 257, lysine 316, and lysine 321. 2 positions are modified to phosphoserine: serine 324 and serine 330. Lysine 345 participates in a covalent cross-link: Glycyl lysine isopeptide (Lys-Gly) (interchain with G-Cter in SUMO2). Serine 381 carries the post-translational modification Phosphoserine. A Glycyl lysine isopeptide (Lys-Gly) (interchain with G-Cter in SUMO2) cross-link involves residue lysine 384. Serine 434 and serine 512 each carry phosphoserine. A coiled-coil region spans residues 505–542 (LEEEDKASEVAIEEEKEEEEDEKSEEDSSDHDENEDEF). Residues 510-547 (KASEVAIEEEKEEEEDEKSEEDSSDHDENEDEFSDEED) form a disordered region. The interval 548–605 (FLNSTKAKLLKLTSSSIDPGLSIKQLGGLYINFNADKLQSNKRTLTQIKEKKKNELLQ) is tdBR region; mediates interaction with DNTT. Lysine 558 participates in a covalent cross-link: Glycyl lysine isopeptide (Lys-Gly) (interchain with G-Cter in SUMO2). Phosphoserine is present on serine 569. Residues lysine 584 and lysine 606 each participate in a glycyl lysine isopeptide (Lys-Gly) (interchain with G-Cter in SUMO2) cross-link. Position 610 is a phosphothreonine (threonine 610). Glycyl lysine isopeptide (Lys-Gly) (interchain with G-Cter in SUMO2) cross-links involve residues lysine 626, lysine 649, lysine 658, lysine 686, and lysine 731.

As to quaternary structure, forms a ternary complex with DNTT and core histone; interaction with PCNA releases DNTT and H2A/H2B histones from this ternary complex. Interacts with ESR1, ESR2, PPARG and RXRA. Part of the small subunit (SSU) processome, composed of more than 70 proteins and the RNA chaperone small nucleolar RNA (snoRNA) U3. In terms of tissue distribution, widely expressed with higher levels in testis.

Its subcellular location is the nucleus. It localises to the nucleolus. Its function is as follows. Regulates the transcriptional activity of DNTT and ESR1. May function as a chromatin remodeling protein. Part of the small subunit (SSU) processome, first precursor of the small eukaryotic ribosomal subunit. During the assembly of the SSU processome in the nucleolus, many ribosome biogenesis factors, an RNA chaperone and ribosomal proteins associate with the nascent pre-rRNA and work in concert to generate RNA folding, modifications, rearrangements and cleavage as well as targeted degradation of pre-ribosomal RNA by the RNA exosome. The polypeptide is Deoxynucleotidyltransferase terminal-interacting protein 2 (Homo sapiens (Human)).